The sequence spans 186 residues: Peptidyl-tRNA hydrolase (186 aa).

Tyrosine 16 lines the tRNA pocket. Histidine 21 serves as the catalytic Proton acceptor. TRNA-binding residues include tyrosine 66, asparagine 68, and asparagine 114.

It belongs to the PTH family. As to quaternary structure, monomer.

The protein resides in the cytoplasm. The enzyme catalyses an N-acyl-L-alpha-aminoacyl-tRNA + H2O = an N-acyl-L-amino acid + a tRNA + H(+). Hydrolyzes ribosome-free peptidyl-tRNAs (with 1 or more amino acids incorporated), which drop off the ribosome during protein synthesis, or as a result of ribosome stalling. Its function is as follows. Catalyzes the release of premature peptidyl moieties from peptidyl-tRNA molecules trapped in stalled 50S ribosomal subunits, and thus maintains levels of free tRNAs and 50S ribosomes. This is Peptidyl-tRNA hydrolase from Ureaplasma parvum serovar 3 (strain ATCC 700970).